The chain runs to 112 residues: MANIHQENEEMEQPVQNGEEDRPLGGGEGHQPERNHRRGQARRLAPNFRWVIPNRQVNDGMGGEGDDMEIFMEEMREIRRKLRELQLRNCLRILMGELSNHHDHHDEFCLMP.

The interval 1-45 (MANIHQENEEMEQPVQNGEEDRPLGGGEGHQPERNHRRGQARRLA) is disordered. The interval 69-94 (EIFMEEMREIRRKLRELQLRNCLRIL) is interaction with p75NTR/NGFR. The interaction with 14-3-3 epsilon stretch occupies residues 69-112 (EIFMEEMREIRRKLRELQLRNCLRILMGELSNHHDHHDEFCLMP). Residues 78 to 88 (IRRKLRELQLR) carry the Nuclear export signal motif. The tract at residues 101–105 (HHDHH) is his cluster. Cys109 is a Zn(2+) binding site.

The protein belongs to the BEX family. As to quaternary structure, self-associates. Binds to the DEATH domain of p75NTR/NGFR. Interacts with 14-3-3 epsilon (YWHAE). Interacts with DIABLO/SMAC. In terms of processing, ubiquitinated. Degraded by the proteasome.

It is found in the nucleus. The protein localises to the cytoplasm. It localises to the cytosol. In terms of biological role, may be a signaling adapter molecule involved in NGFR/p75NTR-mediated apoptosis induced by NGF. Plays a role in zinc-triggered neuronal death. In absence of reductive stress, acts as a pseudosubstrate for the CRL2(FEM1B) complex: associates with FEM1B via zinc, thereby preventing association between FEM1B and its substrates. The chain is Protein BEX3 from Bos taurus (Bovine).